We begin with the raw amino-acid sequence, 400 residues long: Na(+)/H(+) antiporter NhaA (400 aa).

Helical transmembrane passes span 26-46 (AGGILLLFSAVVAMLLANSPL), 71-91 (LIHWINDGFMAVFFVLVGMEV), 107-127 (IFPAIAAIGGMVIPAVVYWFI), 137-157 (GWAIPMATDIAFALGIMALLS), 166-186 (IFLLALAIIDDLGAIVVIALF), 189-209 (HGLSVQALIFSAVAIIVLILL), 225-245 (AILWASVLKSGVHATLAGVII), 273-293 (FVILPLFAFANAGVSFAGIDV), 299-319 (PLLLAIASGLIIGKPVGIFGF), 340-360 (IFAVAVLCGIGFTMSMFLASL), and 373-393 (LSRLGILLGSTVSAILGYLFL).

It belongs to the NhaA Na(+)/H(+) (TC 2.A.33) antiporter family.

The protein localises to the cell inner membrane. The catalysed reaction is Na(+)(in) + 2 H(+)(out) = Na(+)(out) + 2 H(+)(in). Its function is as follows. Na(+)/H(+) antiporter that extrudes sodium in exchange for external protons. The sequence is that of Na(+)/H(+) antiporter NhaA from Haemophilus influenzae (strain ATCC 51907 / DSM 11121 / KW20 / Rd).